Here is a 24-residue protein sequence, read N- to C-terminus: 33.0 kDa cold shock protein (24 aa).

This sequence belongs to the thaumatin family. Homooligomer; disulfide-linked. In terms of processing, glycosylated.

Its subcellular location is the secreted. The protein localises to the extracellular space. It is found in the apoplast. The polypeptide is 33.0 kDa cold shock protein (Arachis hypogaea (Peanut)).